The sequence spans 445 residues: Methylenetetrahydrofolate--tRNA-(uracil-5-)-methyltransferase TrmFO (445 aa).

An FAD-binding site is contributed by 10-15 (GGGLAG).

The protein belongs to the MnmG family. TrmFO subfamily. FAD is required as a cofactor.

The protein resides in the cytoplasm. The catalysed reaction is uridine(54) in tRNA + (6R)-5,10-methylene-5,6,7,8-tetrahydrofolate + NADH + H(+) = 5-methyluridine(54) in tRNA + (6S)-5,6,7,8-tetrahydrofolate + NAD(+). It catalyses the reaction uridine(54) in tRNA + (6R)-5,10-methylene-5,6,7,8-tetrahydrofolate + NADPH + H(+) = 5-methyluridine(54) in tRNA + (6S)-5,6,7,8-tetrahydrofolate + NADP(+). In terms of biological role, catalyzes the folate-dependent formation of 5-methyl-uridine at position 54 (M-5-U54) in all tRNAs. The sequence is that of Methylenetetrahydrofolate--tRNA-(uracil-5-)-methyltransferase TrmFO from Microcystis aeruginosa (strain NIES-843 / IAM M-2473).